The primary structure comprises 539 residues: MSATKYIFVTGGVTSSLGKGIVAASLAKLLQARGFSVTIQKFDPYLNIDPGTLNPYEHGECYVTDDGAETDLDLGHYERFLGTPTSQGNNITTGRIYNTVITKERQGAFLGKTVQVVPHITDEIKRNIQLLGESGKYDIVITEIGGCVGDIESLPFLEAVRQFRWEMGPTDTLVIHLTLVPYLNAAKELKTKPTQHSVKLLSETGIHPDILVCRTEHPLPAELRKKVALFCNVNINSVIESIDAETIYDVPLLMKKEKLDERVLSKLKLSSKNEPDLESWKVFLGKLKNPLSEVNIALVGKYVELPDAYKSISEAFIHAGAMNECKVKIRWISSEQLQKDNLQHHLGFADGILVAPGFGERGLEGKIAAVEFARENNIPFFGICLGMQCAVIEFARNVLGLKDANSTEMNKDTANPVINMMESQKNVTMKGGTMRLGAYPCELTKGSKAHAIYGKSKIMERHRHRYEFNNKYLKQYEKEGMLATGINPETKLVEIVELRDHPFFIGSQFHPELKSTVENPHPIFVKFVKAANDFAKGKK.

An amidoligase domain region spans residues Met1–Leu269. Residue Ser15 coordinates CTP. Ser15 is a binding site for UTP. Ser16–Ile21 is a binding site for ATP. Tyr56 contacts L-glutamine. Asp73 provides a ligand contact to ATP. Positions 73 and 143 each coordinate Mg(2+). CTP contacts are provided by residues Asp150–Glu152, Lys190–Gln195, and Lys226. UTP is bound by residues Lys190 to Gln195 and Lys226. The Glutamine amidotransferase type-1 domain maps to Asn295–Gly537. Position 357 (Gly357) interacts with L-glutamine. Cys384 functions as the Nucleophile; for glutamine hydrolysis in the catalytic mechanism. L-glutamine is bound by residues Leu385–Gln388, Glu408, and Arg465. Catalysis depends on residues His510 and Glu512.

The protein belongs to the CTP synthase family. In terms of assembly, homotetramer.

It catalyses the reaction UTP + L-glutamine + ATP + H2O = CTP + L-glutamate + ADP + phosphate + 2 H(+). The enzyme catalyses L-glutamine + H2O = L-glutamate + NH4(+). The catalysed reaction is UTP + NH4(+) + ATP = CTP + ADP + phosphate + 2 H(+). The protein operates within pyrimidine metabolism; CTP biosynthesis via de novo pathway; CTP from UDP: step 2/2. With respect to regulation, allosterically activated by GTP, when glutamine is the substrate; GTP has no effect on the reaction when ammonia is the substrate. The allosteric effector GTP functions by stabilizing the protein conformation that binds the tetrahedral intermediate(s) formed during glutamine hydrolysis. Inhibited by the product CTP, via allosteric rather than competitive inhibition. Catalyzes the ATP-dependent amination of UTP to CTP with either L-glutamine or ammonia as the source of nitrogen. Regulates intracellular CTP levels through interactions with the four ribonucleotide triphosphates. The protein is CTP synthase of Cytophaga hutchinsonii (strain ATCC 33406 / DSM 1761 / CIP 103989 / NBRC 15051 / NCIMB 9469 / D465).